The sequence spans 521 residues: Cytochrome P450 1A1 (521 aa).

Phe-229 contributes to the substrate binding site. Residue Cys-463 coordinates heme.

Belongs to the cytochrome P450 family. Requires heme as cofactor.

The protein resides in the endoplasmic reticulum membrane. It is found in the microsome membrane. It catalyses the reaction an organic molecule + reduced [NADPH--hemoprotein reductase] + O2 = an alcohol + oxidized [NADPH--hemoprotein reductase] + H2O + H(+). Cytochromes P450 are a group of heme-thiolate monooxygenases. They oxidize a variety of structurally unrelated compounds, including steroids, fatty acids, and xenobiotics. The polypeptide is Cytochrome P450 1A1 (cyp1a1) (Sparus aurata (Gilthead sea bream)).